Here is a 450-residue protein sequence, read N- to C-terminus: Homogentisate 1,2-dioxygenase (450 aa).

His-304 serves as the catalytic Proton acceptor. Fe cation is bound by residues His-347 and Glu-353. 2 residues coordinate homogentisate: Tyr-362 and His-383. His-383 contacts Fe cation.

The protein belongs to the homogentisate dioxygenase family. In terms of assembly, hexamer; dimer of trimers. Requires Fe cation as cofactor.

It carries out the reaction homogentisate + O2 = 4-maleylacetoacetate + H(+). It participates in amino-acid degradation; L-phenylalanine degradation; acetoacetate and fumarate from L-phenylalanine: step 4/6. Involved in the catabolism of homogentisate (2,5-dihydroxyphenylacetate or 2,5-OH-PhAc), a central intermediate in the degradation of phenylalanine and tyrosine. Catalyzes the oxidative ring cleavage of the aromatic ring of homogentisate to yield maleylacetoacetate. This Burkholderia thailandensis (strain ATCC 700388 / DSM 13276 / CCUG 48851 / CIP 106301 / E264) protein is Homogentisate 1,2-dioxygenase.